The chain runs to 276 residues: Phosphatidylglycerol--prolipoprotein diacylglyceryl transferase (276 aa).

Transmembrane regions (helical) follow at residues 17-37 (FGPF…VLGW), 59-79 (FLSW…ILFY), 94-114 (VWDG…AILI), 132-152 (VPVP…GELW), 177-197 (PSEL…LLIA), 208-225 (GYLG…RTTA), and 235-255 (LGYL…MIVI). Residue Arg142 coordinates a 1,2-diacyl-sn-glycero-3-phospho-(1'-sn-glycerol).

The protein belongs to the Lgt family.

The protein localises to the cell inner membrane. The enzyme catalyses L-cysteinyl-[prolipoprotein] + a 1,2-diacyl-sn-glycero-3-phospho-(1'-sn-glycerol) = an S-1,2-diacyl-sn-glyceryl-L-cysteinyl-[prolipoprotein] + sn-glycerol 1-phosphate + H(+). The protein operates within protein modification; lipoprotein biosynthesis (diacylglyceryl transfer). Catalyzes the transfer of the diacylglyceryl group from phosphatidylglycerol to the sulfhydryl group of the N-terminal cysteine of a prolipoprotein, the first step in the formation of mature lipoproteins. The polypeptide is Phosphatidylglycerol--prolipoprotein diacylglyceryl transferase (Acidiphilium cryptum (strain JF-5)).